We begin with the raw amino-acid sequence, 607 residues long: Cytosolic Fe-S cluster assembly factor nar1 (607 aa).

Cysteine 20 lines the [4Fe-4S] cluster pocket. The tract at residues 28 to 47 (PKNESSNSQNPYEVTTEDKV) is disordered. A compositionally biased stretch (polar residues) spans 29–40 (KNESSNSQNPYE). 5 residues coordinate [4Fe-4S] cluster: cysteine 62, cysteine 65, cysteine 68, cysteine 214, and cysteine 269. The disordered stretch occupies residues 439-461 (ARVPAASAGGNRRQPISRNSASA). Positions 452-461 (QPISRNSASA) are enriched in polar residues. Positions 475 and 479 each coordinate [4Fe-4S] cluster. The span at 494–505 (ASTSTQSVTAVE) shows a compositional bias: polar residues. The segment at 494–513 (ASTSTQSVTAVENPSKPTPH) is disordered.

The protein belongs to the NARF family.

Component of the cytosolic Fe/S protein assembly machinery. Required for maturation of extramitochondrial Fe/S proteins. May play a role in the transfer of pre-assembled Fe/S clusters to target apoproteins. This is Cytosolic Fe-S cluster assembly factor nar1 (nar1) from Aspergillus oryzae (strain ATCC 42149 / RIB 40) (Yellow koji mold).